The sequence spans 287 residues: Complement C1q-like protein 2 (287 aa).

The signal sequence occupies residues 1–21 (MALGLLIAVPLLLQAAPPGAA). Residues 65-144 (LSANPPPPFI…GTGGGGDTEG (80 aa)) form a disordered region. The 43-residue stretch at 76 to 118 (GPKGDPGRPGKPGPRGPPGEPGPPGPRGPPGEKGDSGRPGLPG) folds into the Collagen-like domain. The span at 84-104 (PGKPGPRGPPGEPGPPGPRGP) shows a compositional bias: pro residues. A compositionally biased stretch (gly residues) spans 127 to 141 (GGVGVVSGGTGGGGD). One can recognise a C1q domain in the interval 154–287 (FSGPKIAFYV…TFSGFLLYPD (134 aa)).

Forms homotrimers which can further assemble to form higher-order oligomeric complexes. Interacts with ADGRB3. May interact with ERFE. Forms heterooligomers with C1QL3 and C1QL4, when proteins are coexpressed; this interaction does not occur after secretion. In terms of processing, glycosylated, but not with N-linked glycans. Highest expression in eye, followed by placenta and brain, intermediate expression in adipose tissue and lowest expression in lymph node and testis.

Its subcellular location is the secreted. May regulate the number of excitatory synapses that are formed on hippocampus neurons. Has no effect on inhibitory synapses. This chain is Complement C1q-like protein 2 (C1ql2), found in Mus musculus (Mouse).